We begin with the raw amino-acid sequence, 456 residues long: Bifunctional protein GlmU (456 aa).

A pyrophosphorylase region spans residues 1-229; that stretch reads MSTSPLSVVI…LSEVEGVNNR (229 aa). Residues 11–14, lysine 25, glutamine 76, 81–82, 103–105, glycine 140, glutamate 154, asparagine 169, and asparagine 227 each bind UDP-N-acetyl-alpha-D-glucosamine; these read LAAG, GT, and YGD. Aspartate 105 is a binding site for Mg(2+). Position 227 (asparagine 227) interacts with Mg(2+). A linker region spans residues 230–250; the sequence is LQLSALERAYQQQQAQRLLLA. Positions 251-456 are N-acetyltransferase; it reads GVMLTDPARF…SGWERPVKKK (206 aa). 2 residues coordinate UDP-N-acetyl-alpha-D-glucosamine: arginine 333 and lysine 351. Histidine 363 acts as the Proton acceptor in catalysis. Tyrosine 366 and asparagine 377 together coordinate UDP-N-acetyl-alpha-D-glucosamine. Residues alanine 380, 386–387, serine 405, alanine 423, and arginine 440 contribute to the acetyl-CoA site; that span reads NY.

It in the N-terminal section; belongs to the N-acetylglucosamine-1-phosphate uridyltransferase family. In the C-terminal section; belongs to the transferase hexapeptide repeat family. In terms of assembly, homotrimer. Requires Mg(2+) as cofactor.

It localises to the cytoplasm. The catalysed reaction is alpha-D-glucosamine 1-phosphate + acetyl-CoA = N-acetyl-alpha-D-glucosamine 1-phosphate + CoA + H(+). The enzyme catalyses N-acetyl-alpha-D-glucosamine 1-phosphate + UTP + H(+) = UDP-N-acetyl-alpha-D-glucosamine + diphosphate. It functions in the pathway nucleotide-sugar biosynthesis; UDP-N-acetyl-alpha-D-glucosamine biosynthesis; N-acetyl-alpha-D-glucosamine 1-phosphate from alpha-D-glucosamine 6-phosphate (route II): step 2/2. Its pathway is nucleotide-sugar biosynthesis; UDP-N-acetyl-alpha-D-glucosamine biosynthesis; UDP-N-acetyl-alpha-D-glucosamine from N-acetyl-alpha-D-glucosamine 1-phosphate: step 1/1. The protein operates within bacterial outer membrane biogenesis; LPS lipid A biosynthesis. Its function is as follows. Catalyzes the last two sequential reactions in the de novo biosynthetic pathway for UDP-N-acetylglucosamine (UDP-GlcNAc). The C-terminal domain catalyzes the transfer of acetyl group from acetyl coenzyme A to glucosamine-1-phosphate (GlcN-1-P) to produce N-acetylglucosamine-1-phosphate (GlcNAc-1-P), which is converted into UDP-GlcNAc by the transfer of uridine 5-monophosphate (from uridine 5-triphosphate), a reaction catalyzed by the N-terminal domain. This is Bifunctional protein GlmU from Edwardsiella ictaluri (strain 93-146).